The sequence spans 241 residues: Triosephosphate isomerase (241 aa).

Asn9–Lys11 is a substrate binding site. Residue His96 is the Electrophile of the active site. Residue Glu165 is the Proton acceptor of the active site. Residues Gly171, Ser204, and Gly225 to Gly226 contribute to the substrate site.

Belongs to the triosephosphate isomerase family. As to quaternary structure, homodimer.

The protein localises to the cytoplasm. It catalyses the reaction D-glyceraldehyde 3-phosphate = dihydroxyacetone phosphate. Its pathway is carbohydrate biosynthesis; gluconeogenesis. The protein operates within carbohydrate degradation; glycolysis; D-glyceraldehyde 3-phosphate from glycerone phosphate: step 1/1. Involved in the gluconeogenesis. Catalyzes stereospecifically the conversion of dihydroxyacetone phosphate (DHAP) to D-glyceraldehyde-3-phosphate (G3P). The sequence is that of Triosephosphate isomerase from Picosynechococcus sp. (strain ATCC 27264 / PCC 7002 / PR-6) (Agmenellum quadruplicatum).